A 756-amino-acid polypeptide reads, in one-letter code: Alpha-1,2-mannosyltransferase MNN26 (756 aa).

Residues 1 to 10 lie on the Cytoplasmic side of the membrane; the sequence is MSLRRLSPSH. A helical transmembrane segment spans residues 11 to 31; that stretch reads LILGTLVLGVIIFNLYVLTST. Topologically, residues 32 to 756 are extracellular; that stretch reads HEDIKKVKGP…NGKNKQGAAS (725 aa). Over residues 723–734 the composition is skewed to polar residues; the sequence is LGEKSQPKQPEI. The interval 723 to 756 is disordered; that stretch reads LGEKSQPKQPEINNNNNNNNNDDDNGKNKQGAAS.

It belongs to the MNN1/MNT family.

The protein resides in the golgi apparatus membrane. Its pathway is protein modification; protein glycosylation. Alpha-1,2-mannosyltransferase required for cell wall integrity. Responsible for addition of the first alpha-1,2-linked mannose to form the branches on the mannan backbone of oligosaccharides. Addition of alpha-1,2-mannose is required for stabilization of the alpha-1,6-mannose backbone and hence regulates mannan fibril length; and is important for both immune recognition and virulence. This is Alpha-1,2-mannosyltransferase MNN26 (MNN26) from Candida albicans (strain SC5314 / ATCC MYA-2876) (Yeast).